We begin with the raw amino-acid sequence, 160 residues long: Cyclic pyranopterin monophosphate synthase (160 aa).

Residues 74–76 and 112–113 contribute to the substrate site; these read LSH and ME. Asp127 is an active-site residue.

This sequence belongs to the MoaC family. Homohexamer; trimer of dimers.

It catalyses the reaction (8S)-3',8-cyclo-7,8-dihydroguanosine 5'-triphosphate = cyclic pyranopterin phosphate + diphosphate. It functions in the pathway cofactor biosynthesis; molybdopterin biosynthesis. Catalyzes the conversion of (8S)-3',8-cyclo-7,8-dihydroguanosine 5'-triphosphate to cyclic pyranopterin monophosphate (cPMP). This is Cyclic pyranopterin monophosphate synthase from Geobacter sulfurreducens (strain ATCC 51573 / DSM 12127 / PCA).